Here is a 344-residue protein sequence, read N- to C-terminus: Melanocyte-stimulating hormone receptor (344 aa).

Over 1–37 (MPMQGAQRKLLGSLNSTPTATSNPGLAANHTGAPCLE) the chain is Extracellular. An N-linked (GlcNAc...) asparagine glycan is attached at N29. A helical membrane pass occupies residues 38–63 (VSIPDGLFLSLGLVSLVENVLVVAAI). Residues 64–72 (AKNRNLHSS) are Cytoplasmic-facing. Residues 73–93 (MYYFICCLALSDLLVSGSNML) form a helical membrane-spanning segment. Over 94–118 (ETAIILLLEAGTLATRASVVQQLHN) the chain is Extracellular. A helical transmembrane segment spans residues 119-140 (TIDVLTCSSMLCSLCFLGAIAV). The Cytoplasmic segment spans residues 141–163 (DRYISIFYALRYHSIMTLPRAQR). A helical transmembrane segment spans residues 164 to 183 (AIAAIWVASVLSSTLFITYY). At 184–191 (DHAAVLLC) the chain is on the extracellular side. Residues 192-211 (LVVFFLAMLVLMAVLYVHML) traverse the membrane as a helical segment. The Cytoplasmic segment spans residues 212-240 (ARACQHAQGIIRLHNRQLPAHKGFGLRGA). Residues 241–266 (ATLTILLGIFFLCWGPFFLHLTLVVF) traverse the membrane as a helical segment. Over 267-279 (CPQHLTCNCIFKN) the chain is Extracellular. Residues 280–300 (FKVFLTLIICNTIIDPLIYAF) form a helical membrane-spanning segment. Residues 301 to 344 (RSQELRRTLKEVLLCSSWPGCWAEGGGDSVWPGSCVTLRGPLPP) lie on the Cytoplasmic side of the membrane. C315 is lipidated: S-palmitoyl cysteine.

This sequence belongs to the G-protein coupled receptor 1 family. In terms of assembly, interacts with MGRN1, but does not undergo MGRN1-mediated ubiquitination; this interaction competes with GNAS-binding and thus inhibits agonist-induced cAMP production. Interacts with OPN3; the interaction results in a decrease in MC1R-mediated cAMP signaling and ultimately a decrease in melanin production in melanocytes.

Its subcellular location is the cell membrane. Receptor for MSH (alpha, beta and gamma) and ACTH. The activity of this receptor is mediated by G proteins which activate adenylate cyclase. Mediates melanogenesis, the production of eumelanin (black/brown) and phaeomelanin (red/yellow), via regulation of cAMP signaling in melanocytes. The polypeptide is Melanocyte-stimulating hormone receptor (MC1R) (Callithrix jacchus (White-tufted-ear marmoset)).